A 190-amino-acid chain; its full sequence is Putative cyclic ADP-D-ribose synthase ThsB (190 aa).

Belongs to the Thoeris B TIR-like family. In terms of assembly, homodimer.

Its subcellular location is the cytoplasm. With respect to regulation, activated upon phage infection. Functionally, TIR-like domain-containing component of the Thoeris antiviral defense system, composed of ThsA and ThsB. Expression of ThsA and ThsB in B.subtilis (strain BEST7003) confers resistance to phages SBSphiC, SBSphiJ and SPO1. Phage infection activates this protein, generating a signal molecule that in turn activates ThsA. Its function is as follows. Probably hydrolyzes NAD(+) to make a cyclic ADP-D-ribose (cADPR) signaling molecule; might make 3'cADPR. This chain is Putative cyclic ADP-D-ribose synthase ThsB, found in Bacillus amyloliquefaciens (strain Y2) (Bacillus amyloliquefaciens subsp. plantarum (strain B9601-Y2)).